We begin with the raw amino-acid sequence, 182 residues long: Probable pyruvoyl-dependent arginine decarboxylase (182 aa).

Ser-43 carries the post-translational modification Pyruvic acid (Ser).

Belongs to the PdaD family. Requires pyruvate as cofactor.

It catalyses the reaction L-arginine + H(+) = agmatine + CO2. The sequence is that of Probable pyruvoyl-dependent arginine decarboxylase from Chloroherpeton thalassium (strain ATCC 35110 / GB-78).